The following is a 363-amino-acid chain: Homeobox protein Hox-A2 (363 aa).

2 disordered regions span residues 23 to 133 (TSFP…SRRL) and 183 to 216 (MKHKRQTQCKENQNGDGKFKNLEDSGQTEDDEEK). Composition is skewed to polar residues over residues 31–46 (TFQSSSIKNSTLSHST) and 55–78 (TIPSLNPSSHPRQSRPKQSPNGTS). The Antp-type hexapeptide signature appears at 88 to 93 (EYPWMK). Residues 130 to 189 (SRRLRTAYTNTQLLELEKEFHFNKYLCRPRRVEIAALLDLTERQVKVWFQNRRMKHKRQT) constitute a DNA-binding region (homeobox).

Belongs to the Antp homeobox family. Proboscipedia subfamily.

The protein localises to the nucleus. Its function is as follows. Sequence-specific transcription factor which is part of a developmental regulatory system that provides cells with specific positional identities on the anterior-posterior axis. The protein is Homeobox protein Hox-A2 (HOXA2) of Heterodontus francisci (Horn shark).